The chain runs to 219 residues: MTQDELKKAVGWAALDYVRPDTIVGVGTGSTAAHFIDALGSIKHQIKGAVSSSDASTEKLKSLGIPVFDANDVDSLDVYVDGADEINGHMQMIKGGGAALTREKIISALSRQFICIVDASKQVDVLGKFPLPVEVIPMARSYVARELVKLGGQPEYRQGVVTDNGNVILDVHNLNIMDAVAVENHINGIAGVVTVGLFANRGADVALVGTADGVKTVTK.

Residues 28–31 (TGST), 81–84 (DGAD), and 94–97 (KGGG) contribute to the substrate site. Glu-103 functions as the Proton acceptor in the catalytic mechanism. Lys-121 provides a ligand contact to substrate.

The protein belongs to the ribose 5-phosphate isomerase family. Homodimer.

It carries out the reaction aldehydo-D-ribose 5-phosphate = D-ribulose 5-phosphate. Its pathway is carbohydrate degradation; pentose phosphate pathway; D-ribose 5-phosphate from D-ribulose 5-phosphate (non-oxidative stage): step 1/1. In terms of biological role, catalyzes the reversible conversion of ribose-5-phosphate to ribulose 5-phosphate. The sequence is that of Ribose-5-phosphate isomerase A from Pectobacterium atrosepticum (strain SCRI 1043 / ATCC BAA-672) (Erwinia carotovora subsp. atroseptica).